The sequence spans 426 residues: Histidine--tRNA ligase (426 aa).

Belongs to the class-II aminoacyl-tRNA synthetase family. As to quaternary structure, homodimer.

It localises to the cytoplasm. It carries out the reaction tRNA(His) + L-histidine + ATP = L-histidyl-tRNA(His) + AMP + diphosphate + H(+). The protein is Histidine--tRNA ligase of Malacoplasma penetrans (strain HF-2) (Mycoplasma penetrans).